The chain runs to 123 residues: Large ribosomal subunit protein bL12 (123 aa).

This sequence belongs to the bacterial ribosomal protein bL12 family. As to quaternary structure, homodimer. Part of the ribosomal stalk of the 50S ribosomal subunit. Forms a multimeric L10(L12)X complex, where L10 forms an elongated spine to which 2 to 4 L12 dimers bind in a sequential fashion. Binds GTP-bound translation factors.

Functionally, forms part of the ribosomal stalk which helps the ribosome interact with GTP-bound translation factors. Is thus essential for accurate translation. This Bartonella henselae (strain ATCC 49882 / DSM 28221 / CCUG 30454 / Houston 1) (Rochalimaea henselae) protein is Large ribosomal subunit protein bL12.